A 291-amino-acid chain; its full sequence is Probable cell wall amidase LytH (291 aa).

The first 40 residues, 1–40, serve as a signal peptide directing secretion; sequence MKKIEAWLSKKGLKNKRTLIVVIAFVLFIIFLFLLLNSNS. An SH3b domain is found at 41–105; sequence EDSGNITITE…WIAGWHTNLD (65 aa). The disordered stretch occupies residues 118–140; sequence QGKTIVLDPGHGGSDQGASSNTK. A MurNAc-LAA domain is found at 122 to 286; that stretch reads IVLDPGHGGS…LEQAIVDGLK (165 aa).

It belongs to the N-acetylmuramoyl-L-alanine amidase 3 family.

The protein resides in the secreted. Probably involved in cell-wall metabolism. In Staphylococcus aureus (strain USA300), this protein is Probable cell wall amidase LytH (lytH).